The primary structure comprises 403 residues: Aromatic-L-amino-acid decarboxylase (403 aa).

Residue T8 participates in substrate binding. 2 residues coordinate pyridoxal 5'-phosphate: A74 and S75. Substrate is bound at residue H118. H118 is a catalytic residue. Pyridoxal 5'-phosphate-binding residues include D197 and N226. Position 229 is an N6-(pyridoxal phosphate)lysine (K229). The disordered stretch occupies residues 250 to 276 (NAFNVDPLYLKHDMQGSAPDYRHWQIP).

This sequence belongs to the group II decarboxylase family. In terms of assembly, homodimer. Requires pyridoxal 5'-phosphate as cofactor.

The catalysed reaction is L-dopa + H(+) = dopamine + CO2. It catalyses the reaction 5-hydroxy-L-tryptophan + H(+) = serotonin + CO2. Catalyzes the decarboxylation of L-3,4-dihydroxyphenylalanine (L-DOPA) to dopamine and L-5-hydroxytryptophan (5-HTP) to serotonin. Catalyzes the formation of serotonin more efficiently than dopamine. Displays no activity to tyrosine. Variation in the synthesis of bioamines may be a factor contributing to natural variation in life span. This is Aromatic-L-amino-acid decarboxylase (Ddc) from Drosophila lebanonensis (Fruit fly).